Consider the following 338-residue polypeptide: Lipoate-protein ligase A (338 aa).

A BPL/LPL catalytic domain is found at 29–216; the sequence is PATQRVLFLW…AFFAHYGERV (188 aa). Residues arginine 71, 76-79, and lysine 134 each bind ATP; that span reads GAVF. Residue lysine 134 participates in (R)-lipoate binding.

The protein belongs to the LplA family. In terms of assembly, monomer.

The protein resides in the cytoplasm. It carries out the reaction L-lysyl-[lipoyl-carrier protein] + (R)-lipoate + ATP = N(6)-[(R)-lipoyl]-L-lysyl-[lipoyl-carrier protein] + AMP + diphosphate + H(+). Its pathway is protein modification; protein lipoylation via exogenous pathway; protein N(6)-(lipoyl)lysine from lipoate: step 1/2. The protein operates within protein modification; protein lipoylation via exogenous pathway; protein N(6)-(lipoyl)lysine from lipoate: step 2/2. Functionally, catalyzes both the ATP-dependent activation of exogenously supplied lipoate to lipoyl-AMP and the transfer of the activated lipoyl onto the lipoyl domains of lipoate-dependent enzymes. This is Lipoate-protein ligase A from Escherichia coli O1:K1 / APEC.